The sequence spans 1482 residues: Lysine-specific demethylase rbr-2 (1482 aa).

Residues 1–45 are disordered; the sequence is MRGRRQEDIATTSSAPSTSTSHKKKTVSSNGSFRPRTQSNPGGKM. Low complexity predominate over residues 11-20; that stretch reads TTSSAPSTST. The span at 30 to 41 shows a compositional bias: polar residues; that stretch reads NGSFRPRTQSNP. The JmjN domain occupies 61 to 102; sequence APVYYPTSEEFADPIEYVAKIRPDAERYGVVKIVPPSDFKPP. The ARID domain maps to 126 to 223; sequence VKEKHTFIER…HIEPFNRNLK (98 aa). The segment at 244–316 is disordered; sequence YQHHHGTMRS…SKTEEDEEEN (73 aa). The segment covering 251 to 264 has biased composition (basic and acidic residues); the sequence is MRSEPENTDGKNTE. The span at 277–288 shows a compositional bias: basic residues; that stretch reads GRRRSKNKKPVP. The PHD-type 1 zinc finger occupies 322–374; that stretch reads QVYCVSCNEGKDEDLLLLCDIEGCNSGRHTYCCDPVLDEVPEGEWRCPKCIES. The JmjC domain occupies 471 to 637; the sequence is QYANHAWNLN…KGRECVQSYS (167 aa). Fe cation is bound by residues histidine 517, aspartate 520, and histidine 605. A PHD-type 2 zinc finger spans residues 1206 to 1260; it reads LEGCCCLGGNKSDSSESVLSCIMCESQFHVRCCEWSTFFQHLPKGCFMCVRCLRG. The tract at residues 1361–1403 is disordered; sequence QQRPVKSKPSASLFDPKLNSKRKRPNPSQKDSSKSKSRKRQGQ. The PHD-type 3 zinc-finger motif lies at 1416–1471; that stretch reads FKSCQARSCLKPFGDSVNWVMCDAGCKNWFHVICVGFTLREINDMHEYRCSSCLDH.

It belongs to the JARID1 histone demethylase family. It depends on Fe(2+) as a cofactor.

It localises to the nucleus. It carries out the reaction N(6),N(6),N(6)-trimethyl-L-lysyl(4)-[histone H3] + 3 2-oxoglutarate + 3 O2 = L-lysyl(4)-[histone H3] + 3 formaldehyde + 3 succinate + 3 CO2. Histone demethylase that specifically demethylates 'Lys-4' of histone H3, thereby playing a central role in histone code. Does not demethylate histone H3 'Lys-9', H3 'Lys-27', H3 'Lys-36', H3 'Lys-79' or H4 'Lys-20'. Demethylates trimethylated and dimethylated but not monomethylated H3 'Lys-4'. Involved in larval development and vulva formation. This is Lysine-specific demethylase rbr-2 (rbr-2) from Caenorhabditis briggsae.